The chain runs to 171 residues: Shikimate kinase (171 aa).

Residue G14–T19 coordinates ATP. Position 18 (S18) interacts with Mg(2+). The substrate site is built by D36, R60, and G82. R120 is an ATP binding site. R139 provides a ligand contact to substrate. Q156 provides a ligand contact to ATP.

This sequence belongs to the shikimate kinase family. In terms of assembly, monomer. Mg(2+) serves as cofactor.

Its subcellular location is the cytoplasm. It catalyses the reaction shikimate + ATP = 3-phosphoshikimate + ADP + H(+). The protein operates within metabolic intermediate biosynthesis; chorismate biosynthesis; chorismate from D-erythrose 4-phosphate and phosphoenolpyruvate: step 5/7. In terms of biological role, catalyzes the specific phosphorylation of the 3-hydroxyl group of shikimic acid using ATP as a cosubstrate. This Shewanella amazonensis (strain ATCC BAA-1098 / SB2B) protein is Shikimate kinase.